The sequence spans 1297 residues: Phosphoribosylformylglycinamidine synthase (1297 aa).

The disordered stretch occupies residues 304 to 323 (PFPGAATGSGGEIRDEGATG). ATP-binding positions include 307 to 318 (GAATGSGGEIRD) and alanine 678. Residues aspartate 679, glutamate 718, asparagine 722, and aspartate 886 each coordinate Mg(2+). Residue serine 888 coordinates ATP. The 255-residue stretch at 1043–1297 (RIAILREQGV…LFQNARVALG (255 aa)) folds into the Glutamine amidotransferase type-1 domain. Cysteine 1137 serves as the catalytic Nucleophile. Residues histidine 1262 and glutamate 1264 contribute to the active site.

The protein in the N-terminal section; belongs to the FGAMS family. In terms of assembly, monomer.

The protein resides in the cytoplasm. It carries out the reaction N(2)-formyl-N(1)-(5-phospho-beta-D-ribosyl)glycinamide + L-glutamine + ATP + H2O = 2-formamido-N(1)-(5-O-phospho-beta-D-ribosyl)acetamidine + L-glutamate + ADP + phosphate + H(+). It participates in purine metabolism; IMP biosynthesis via de novo pathway; 5-amino-1-(5-phospho-D-ribosyl)imidazole from N(2)-formyl-N(1)-(5-phospho-D-ribosyl)glycinamide: step 1/2. Phosphoribosylformylglycinamidine synthase involved in the purines biosynthetic pathway. Catalyzes the ATP-dependent conversion of formylglycinamide ribonucleotide (FGAR) and glutamine to yield formylglycinamidine ribonucleotide (FGAM) and glutamate. In Histophilus somni (strain 129Pt) (Haemophilus somnus), this protein is Phosphoribosylformylglycinamidine synthase.